Reading from the N-terminus, the 310-residue chain is Porphobilinogen deaminase (310 aa).

Position 243 is an S-(dipyrrolylmethanemethyl)cysteine (Cys243).

The protein belongs to the HMBS family. Monomer. It depends on dipyrromethane as a cofactor.

The catalysed reaction is 4 porphobilinogen + H2O = hydroxymethylbilane + 4 NH4(+). The protein operates within porphyrin-containing compound metabolism; protoporphyrin-IX biosynthesis; coproporphyrinogen-III from 5-aminolevulinate: step 2/4. Tetrapolymerization of the monopyrrole PBG into the hydroxymethylbilane pre-uroporphyrinogen in several discrete steps. The sequence is that of Porphobilinogen deaminase from Mannheimia succiniciproducens (strain KCTC 0769BP / MBEL55E).